A 254-amino-acid polypeptide reads, in one-letter code: Pimeloyl-[acyl-carrier protein] methyl ester esterase (254 aa).

In terms of domain architecture, AB hydrolase-1 spans 14 to 242 (LVLLHGWGMN…ASHAPFISHP (229 aa)). Substrate-binding positions include Trp-20, 82-83 (SL), and 143-147 (FLAIQ). Ser-82 acts as the Nucleophile in catalysis. Active-site residues include Asp-207 and His-235. His-235 is a binding site for substrate.

It belongs to the AB hydrolase superfamily. Carboxylesterase BioH family. In terms of assembly, monomer.

The protein localises to the cytoplasm. The enzyme catalyses 6-carboxyhexanoyl-[ACP] methyl ester + H2O = 6-carboxyhexanoyl-[ACP] + methanol + H(+). The protein operates within cofactor biosynthesis; biotin biosynthesis. Its function is as follows. The physiological role of BioH is to remove the methyl group introduced by BioC when the pimeloyl moiety is complete. It allows to synthesize pimeloyl-ACP via the fatty acid synthetic pathway through the hydrolysis of the ester bonds of pimeloyl-ACP esters. The sequence is that of Pimeloyl-[acyl-carrier protein] methyl ester esterase from Aeromonas salmonicida (strain A449).